Consider the following 556-residue polypeptide: Protein misato homolog 1 (556 aa).

A Phosphoserine modification is found at S41.

Belongs to the misato family.

It localises to the mitochondrion outer membrane. It is found in the cytoplasm. Its function is as follows. Involved in the regulation of mitochondrial distribution and morphology. Required for mitochondrial fusion and mitochondrial network formation. This Mus musculus (Mouse) protein is Protein misato homolog 1 (Msto1).